A 110-amino-acid chain; its full sequence is Large ribosomal subunit protein bL20 (110 aa).

This sequence belongs to the bacterial ribosomal protein bL20 family.

In terms of biological role, binds directly to 23S ribosomal RNA and is necessary for the in vitro assembly process of the 50S ribosomal subunit. It is not involved in the protein synthesizing functions of that subunit. The chain is Large ribosomal subunit protein bL20 from Shigella boydii serotype 4 (strain Sb227).